The chain runs to 360 residues: Tryptophan--tRNA ligase, mitochondrial (360 aa).

Residues Gln38 and 44–47 (HLGN) contribute to the ATP site. Positions 39 to 47 (PTGIPHLGN) match the 'HIGH' region motif. Position 168 (Asp168) interacts with L-tryptophan. ATP is bound by residues 180 to 182 (GED) and 229 to 233 (KMSKS). Basic and acidic residues predominate over residues 220-230 (IRSLREPEKKM). A disordered region spans residues 220–241 (IRSLREPEKKMSKSSGGPRSRI). Positions 229 to 233 (KMSKS) match the 'KMSKS' region motif.

This sequence belongs to the class-I aminoacyl-tRNA synthetase family.

The protein localises to the mitochondrion matrix. It catalyses the reaction tRNA(Trp) + L-tryptophan + ATP = L-tryptophyl-tRNA(Trp) + AMP + diphosphate + H(+). Its function is as follows. Catalyzes the attachment of tryptophan to tRNA(Trp). The protein is Tryptophan--tRNA ligase, mitochondrial of Caenorhabditis elegans.